Here is a 502-residue protein sequence, read N- to C-terminus: UPF0371 protein CLL_A2797 (502 aa).

Belongs to the UPF0371 family.

This Clostridium botulinum (strain Eklund 17B / Type B) protein is UPF0371 protein CLL_A2797.